A 124-amino-acid chain; its full sequence is Small ribosomal subunit protein uS12 (124 aa).

Residue Asp-89 is modified to 3-methylthioaspartic acid. A disordered region spans residues 103-124; that stretch reads DTAGVKDRRQSRSKYGAKSPKE.

The protein belongs to the universal ribosomal protein uS12 family. As to quaternary structure, part of the 30S ribosomal subunit. Contacts proteins S8 and S17. May interact with IF1 in the 30S initiation complex.

Functionally, with S4 and S5 plays an important role in translational accuracy. Its function is as follows. Interacts with and stabilizes bases of the 16S rRNA that are involved in tRNA selection in the A site and with the mRNA backbone. Located at the interface of the 30S and 50S subunits, it traverses the body of the 30S subunit contacting proteins on the other side and probably holding the rRNA structure together. The combined cluster of proteins S8, S12 and S17 appears to hold together the shoulder and platform of the 30S subunit. The chain is Small ribosomal subunit protein uS12 from Prochlorococcus marinus (strain NATL2A).